A 172-amino-acid chain; its full sequence is Ly6/PLAUR domain-containing protein 6B (172 aa).

Residues Met-1 to Ala-25 form the signal peptide. Residues Phe-46–Ala-137 form the UPAR/Ly6 domain. Residues Phe-46–Ala-140 are sufficient for inhibiting alpha-7 nAChR currents. Cystine bridges form between Cys-48-Cys-76, Cys-51-Cys-60, Cys-69-Cys-95, Cys-101-Cys-120, Cys-106-Cys-117, and Cys-121-Cys-126. Ser-148 carries the GPI-anchor amidated serine lipid modification. Positions Gly-149 to Leu-172 are cleaved as a propeptide — removed in mature form.

The protein localises to the cell membrane. In terms of biological role, likely acts as a modulator of nicotinic acetylcholine receptors (nAChRs) activity. In vitro acts on nAChRs in a subtype- and stoichiometry-dependent manner. Modulates specifically alpha-3(3):beta-4(2) nAChRs by enhancing the sensitivity to ACh, decreasing ACh-induced maximal current response and increasing the rate of desensitization to ACh; has no effect on alpha-7 homomeric nAChRs; modulates alpha-3(2):alpha-5:beta-4(2) nAChRs in the context of CHRNA5/alpha-5 variant Asn-398 but not its wild-type sequence. However, according to another report in vitro it can weakly inhibits alpha-7 nAChRs. The polypeptide is Ly6/PLAUR domain-containing protein 6B (Lypd6b) (Mus musculus (Mouse)).